The chain runs to 337 residues: Protein FAM76B (337 aa).

The disordered stretch occupies residues 143-241; that stretch reads EQRKSLGSTH…INQSTDSGGT (99 aa). The span at 147 to 159 shows a compositional bias: low complexity; that stretch reads SLGSTHSNSSSSS. The span at 166–187 shows a compositional bias: basic residues; it reads HHSKHHHHHHHHHRHSSSHHKI. Residues 213-222 show a composition bias toward basic and acidic residues; sequence TPKKKPKLEF. Positions 226 to 241 are enriched in polar residues; the sequence is NGDSSSINQSTDSGGT. A coiled-coil region spans residues 301–326; sequence KDFVEQLQGKNRELLKQVAALSKGKK.

Belongs to the FAM76 family.

Its function is as follows. Plays a role in hematopoiesis and immune system development, and participates in the inflammatory response. The polypeptide is Protein FAM76B (fam76b) (Xenopus laevis (African clawed frog)).